The following is a 197-amino-acid chain: NADH-quinone oxidoreductase subunit C (197 aa).

This sequence belongs to the complex I 30 kDa subunit family. NDH-1 is composed of 14 different subunits. Subunits NuoB, C, D, E, F, and G constitute the peripheral sector of the complex.

It is found in the cell inner membrane. The enzyme catalyses a quinone + NADH + 5 H(+)(in) = a quinol + NAD(+) + 4 H(+)(out). Its function is as follows. NDH-1 shuttles electrons from NADH, via FMN and iron-sulfur (Fe-S) centers, to quinones in the respiratory chain. The immediate electron acceptor for the enzyme in this species is believed to be ubiquinone. Couples the redox reaction to proton translocation (for every two electrons transferred, four hydrogen ions are translocated across the cytoplasmic membrane), and thus conserves the redox energy in a proton gradient. In Rickettsia typhi (strain ATCC VR-144 / Wilmington), this protein is NADH-quinone oxidoreductase subunit C.